Reading from the N-terminus, the 218-residue chain is Ribonuclease HII (218 aa).

In terms of domain architecture, RNase H type-2 spans 13–202 (DLVAGVDEVG…VRAAHEARAT (190 aa)). Residues D19, E20, and D111 each contribute to the a divalent metal cation site.

The protein belongs to the RNase HII family. It depends on Mn(2+) as a cofactor. Mg(2+) serves as cofactor.

Its subcellular location is the cytoplasm. It catalyses the reaction Endonucleolytic cleavage to 5'-phosphomonoester.. Functionally, endonuclease that specifically degrades the RNA of RNA-DNA hybrids. The chain is Ribonuclease HII from Pseudomonas syringae pv. syringae (strain B728a).